The chain runs to 419 residues: 4-hydroxyphenylpyruvate dioxygenase (419 aa).

VOC domains follow at residues 41–187 (GYHH…FIQR) and 218–376 (AIDH…LFTK). Fe cation is bound by residues H221, H304, and E387.

Belongs to the 4HPPD family. Fe cation serves as cofactor.

The catalysed reaction is 3-(4-hydroxyphenyl)pyruvate + O2 = homogentisate + CO2. It functions in the pathway amino-acid degradation; L-phenylalanine degradation; acetoacetate and fumarate from L-phenylalanine: step 3/6. The polypeptide is 4-hydroxyphenylpyruvate dioxygenase (HPPD) (Zymoseptoria tritici (Speckled leaf blotch fungus)).